Reading from the N-terminus, the 383-residue chain is 1-deoxy-D-xylulose 5-phosphate reductoisomerase (383 aa).

Residues Thr-10, Gly-11, Ser-12, Ile-13, Asn-38, and Asn-121 each coordinate NADPH. Lys-122 is a binding site for 1-deoxy-D-xylulose 5-phosphate. NADPH is bound at residue Glu-123. Asp-147 is a binding site for Mn(2+). Ser-148, Glu-149, Ser-172, and His-195 together coordinate 1-deoxy-D-xylulose 5-phosphate. Position 149 (Glu-149) interacts with Mn(2+). Gly-201 contributes to the NADPH binding site. Residues Ser-208, Asn-213, Lys-214, and Glu-217 each contribute to the 1-deoxy-D-xylulose 5-phosphate site. Glu-217 contacts Mn(2+).

It belongs to the DXR family. Requires Mg(2+) as cofactor. Mn(2+) is required as a cofactor.

The enzyme catalyses 2-C-methyl-D-erythritol 4-phosphate + NADP(+) = 1-deoxy-D-xylulose 5-phosphate + NADPH + H(+). Its pathway is isoprenoid biosynthesis; isopentenyl diphosphate biosynthesis via DXP pathway; isopentenyl diphosphate from 1-deoxy-D-xylulose 5-phosphate: step 1/6. Functionally, catalyzes the NADPH-dependent rearrangement and reduction of 1-deoxy-D-xylulose-5-phosphate (DXP) to 2-C-methyl-D-erythritol 4-phosphate (MEP). This Vesicomyosocius okutanii subsp. Calyptogena okutanii (strain HA) protein is 1-deoxy-D-xylulose 5-phosphate reductoisomerase.